We begin with the raw amino-acid sequence, 270 residues long: Bacterial microcompartment shell protein PduB (270 aa).

BMC circularly permuted domains lie at 47-152 and 154-262; these read EFVG…DRTF and DVYA…GSEP.

This sequence belongs to the EutL/PduB family. Homotrimerizes to form a pseudohexamer with a central pore. The trimers pack into an array. Both forms interact with shell protein PduA. Post-translationally, in purified BMCs seen as a 30.0 kDa and 25.0 kDa form; the smaller form is called PduB'.

It localises to the bacterial microcompartment. The protein operates within polyol metabolism; 1,2-propanediol degradation. Functionally, the two proteins produced are among the major shell proteins of the bacterial microcompartment (BMC) shell dedicated to 1,2-propanediol (1,2-PD) degradation. Overexpression of the gene gives large amorphous intracellular structures; when only PduB is overexpressed large circular bodies are observed which contain concentric rings, whereas with PduB' overexpression internal bodies with regular straight-lined structures were generated. The N-terminus of the long form (PduB) is required for correct formation of BMCs. May play a major role in binding the enzyme contents to the shell. Its function is as follows. Expression of a cosmid containing the full 21-gene pdu operon in E.coli allows E.coli to grow on 1,2-propanediol (1,2-PD) with the appearance of BMCs in its cytoplasm. The 1,2-PD-specific bacterial microcompartment (BMC) concentrates low levels of 1,2-PD catabolic enzymes, concentrates volatile reaction intermediates thus enhancing pathway flux and keeps the level of toxic, mutagenic propionaldehyde low. The polypeptide is Bacterial microcompartment shell protein PduB (Citrobacter freundii).